The sequence spans 364 residues: Nucleoside ABC transporter permease protein NupB (364 aa).

8 helical membrane passes run 9–29, 77–99, 105–125, 138–158, 195–215, 244–264, 284–304, and 326–346; these read LVPLIAIVFGFLLGAIIMLAF, FNIGMSGQALAGWISSMWFALSF, LLMIPLVVIIGMVFGAFMGFI, VITTIMLNYIMLFFSTFMIHS, TLNIGLIIAIIALVIMAIIFT, LILSMVVAGALAGLGGVVYGF, MAVALLGGNSPIGILFAALLF, and VVTAAIIFFIAVKFIIEVMLP.

It belongs to the binding-protein-dependent transport system permease family. The complex is composed of two ATP-binding proteins (NupA), two transmembrane proteins (NupB and NupC) and a solute-binding protein (BmpA).

Its subcellular location is the cell membrane. Its function is as follows. Part of an ABC transporter complex involved in the uptake of all common nucleosides. Responsible for the translocation of the substrate across the membrane. This is Nucleoside ABC transporter permease protein NupB from Lactococcus lactis subsp. cremoris (strain MG1363).